The following is a 269-amino-acid chain: uncharacterized protein (269 aa).

ATP contacts are provided by residues 12-19 (GKGGTGKS) and 130-137 (GYLIVGKS).

To M.jannaschii MJ0578.

This is an uncharacterized protein from Methanocaldococcus jannaschii (strain ATCC 43067 / DSM 2661 / JAL-1 / JCM 10045 / NBRC 100440) (Methanococcus jannaschii).